A 698-amino-acid polypeptide reads, in one-letter code: Polyribonucleotide nucleotidyltransferase (698 aa).

Positions 485 and 491 each coordinate Mg(2+). Positions 552–612 (PRVEMMTIPE…SDLKGAKSIV (61 aa)) constitute a KH domain. The 69-residue stretch at 622–690 (GMVYDGTVKK…KLGRLNLSYV (69 aa)) folds into the S1 motif domain.

Belongs to the polyribonucleotide nucleotidyltransferase family. The cofactor is Mg(2+).

It localises to the cytoplasm. The catalysed reaction is RNA(n+1) + phosphate = RNA(n) + a ribonucleoside 5'-diphosphate. Its function is as follows. Involved in mRNA degradation. Catalyzes the phosphorolysis of single-stranded polyribonucleotides processively in the 3'- to 5'-direction. The protein is Polyribonucleotide nucleotidyltransferase of Treponema denticola (strain ATCC 35405 / DSM 14222 / CIP 103919 / JCM 8153 / KCTC 15104).